We begin with the raw amino-acid sequence, 654 residues long: DNA-directed RNA polymerase III subunit RPC3 (654 aa).

Phosphothreonine is present on T27. Disordered stretches follow at residues 381-401 (LSRK…ASLP) and 422-448 (KSLQ…EDPH). A phosphoserine mark is found at S392 and S394. The segment covering 429-444 (DTQEEDEEEEDLDADT) has biased composition (acidic residues). The segment at 581–602 (LEWNMANLLFKKEKLKQENSTL) is leucine-zipper.

The protein belongs to the eukaryotic RPC3/POLR3C RNA polymerase subunit family. In terms of assembly, component of the RNA polymerase III (Pol III) complex consisting of 17 subunits.

Its subcellular location is the cytoplasm. The protein resides in the nucleus. Its function is as follows. DNA-dependent RNA polymerase catalyzes the transcription of DNA into RNA using the four ribonucleoside triphosphates as substrates. Specific core component of RNA polymerase III which synthesizes small RNAs, such as 5S rRNA and tRNAs. In Saccharomyces cerevisiae (strain ATCC 204508 / S288c) (Baker's yeast), this protein is DNA-directed RNA polymerase III subunit RPC3 (RPC82).